The sequence spans 500 residues: L-arabinose isomerase (500 aa).

4 residues coordinate Mn(2+): Glu-306, Glu-333, His-350, and His-450.

It belongs to the arabinose isomerase family. As to quaternary structure, homohexamer. Mn(2+) is required as a cofactor.

The enzyme catalyses beta-L-arabinopyranose = L-ribulose. The protein operates within carbohydrate degradation; L-arabinose degradation via L-ribulose; D-xylulose 5-phosphate from L-arabinose (bacterial route): step 1/3. In terms of biological role, catalyzes the conversion of L-arabinose to L-ribulose. The protein is L-arabinose isomerase of Salmonella newport (strain SL254).